The primary structure comprises 200 residues: Recombination protein RecR (200 aa).

A C4-type zinc finger spans residues 57-72; the sequence is CSQCRDFTEEDTCNIC. Positions 81-176 constitute a Toprim domain; sequence GLLCVVEMPA…KVSRIAHGIP (96 aa).

This sequence belongs to the RecR family.

Its function is as follows. May play a role in DNA repair. It seems to be involved in an RecBC-independent recombinational process of DNA repair. It may act with RecF and RecO. The sequence is that of Recombination protein RecR from Haemophilus influenzae (strain 86-028NP).